The chain runs to 840 residues: Protein translocase subunit SecA (840 aa).

ATP contacts are provided by residues Q85, 103-107 (GEGKT), and D492. The tract at residues 787 to 822 (QRERVAKETGASHGGDSQEVKKKPVKKEPKVGRNDL) is disordered. Positions 802 to 819 (DSQEVKKKPVKKEPKVGR) are enriched in basic and acidic residues. Residues C823, C825, C834, and C835 each contribute to the Zn(2+) site.

This sequence belongs to the SecA family. Monomer and homodimer. Part of the essential Sec protein translocation apparatus which comprises SecA, SecYEG and auxiliary proteins SecDF. Other proteins may also be involved. Zn(2+) serves as cofactor.

The protein resides in the cell membrane. It is found in the cytoplasm. The catalysed reaction is ATP + H2O + cellular proteinSide 1 = ADP + phosphate + cellular proteinSide 2.. Part of the Sec protein translocase complex. Interacts with the SecYEG preprotein conducting channel. Has a central role in coupling the hydrolysis of ATP to the transfer of proteins into and across the cell membrane, serving as an ATP-driven molecular motor driving the stepwise translocation of polypeptide chains across the membrane. This chain is Protein translocase subunit SecA, found in Clostridium perfringens (strain ATCC 13124 / DSM 756 / JCM 1290 / NCIMB 6125 / NCTC 8237 / Type A).